Consider the following 460-residue polypeptide: Bifunctional protein GlmU (460 aa).

A pyrophosphorylase region spans residues 1–232 (MALNVVILAA…AIEVEGANNR (232 aa)). UDP-N-acetyl-alpha-D-glucosamine is bound by residues 8–11 (LAAG), Lys-22, Gln-73, 78–79 (GT), 100–102 (YGD), Gly-137, Glu-157, Asn-172, and Asn-230. Asp-102 contributes to the Mg(2+) binding site. A Mg(2+)-binding site is contributed by Asn-230. The tract at residues 233 to 253 (VQLAQLERAYQAREAEKLMLA) is linker. An N-acetyltransferase region spans residues 254-460 (GANLRDPSRI…GWQRPVKIKK (207 aa)). Residues Arg-336 and Lys-354 each coordinate UDP-N-acetyl-alpha-D-glucosamine. His-366 (proton acceptor) is an active-site residue. UDP-N-acetyl-alpha-D-glucosamine-binding residues include Tyr-369 and Asn-380. Acetyl-CoA is bound by residues Ala-383, 389 to 390 (NY), Ser-408, Ala-426, and Arg-443.

In the N-terminal section; belongs to the N-acetylglucosamine-1-phosphate uridyltransferase family. It in the C-terminal section; belongs to the transferase hexapeptide repeat family. As to quaternary structure, homotrimer. The cofactor is Mg(2+).

The protein resides in the cytoplasm. It carries out the reaction alpha-D-glucosamine 1-phosphate + acetyl-CoA = N-acetyl-alpha-D-glucosamine 1-phosphate + CoA + H(+). It catalyses the reaction N-acetyl-alpha-D-glucosamine 1-phosphate + UTP + H(+) = UDP-N-acetyl-alpha-D-glucosamine + diphosphate. The protein operates within nucleotide-sugar biosynthesis; UDP-N-acetyl-alpha-D-glucosamine biosynthesis; N-acetyl-alpha-D-glucosamine 1-phosphate from alpha-D-glucosamine 6-phosphate (route II): step 2/2. It participates in nucleotide-sugar biosynthesis; UDP-N-acetyl-alpha-D-glucosamine biosynthesis; UDP-N-acetyl-alpha-D-glucosamine from N-acetyl-alpha-D-glucosamine 1-phosphate: step 1/1. Its pathway is bacterial outer membrane biogenesis; LPS lipid A biosynthesis. Functionally, catalyzes the last two sequential reactions in the de novo biosynthetic pathway for UDP-N-acetylglucosamine (UDP-GlcNAc). The C-terminal domain catalyzes the transfer of acetyl group from acetyl coenzyme A to glucosamine-1-phosphate (GlcN-1-P) to produce N-acetylglucosamine-1-phosphate (GlcNAc-1-P), which is converted into UDP-GlcNAc by the transfer of uridine 5-monophosphate (from uridine 5-triphosphate), a reaction catalyzed by the N-terminal domain. The polypeptide is Bifunctional protein GlmU (Shewanella baltica (strain OS195)).